The primary structure comprises 413 residues: Synaptosomal-associated protein 47 (413 aa).

In terms of domain architecture, t-SNARE coiled-coil homology 1 spans 109–171 (AANIPSHVTR…DVADRLLTEL (63 aa)). Residues 321–342 (RHAASRPKGCTPHRELPTGGQE) are disordered. One can recognise a t-SNARE coiled-coil homology 2 domain in the interval 350 to 412 (KNLPLFSEGE…DKQNRRMRKL (63 aa)).

It belongs to the SVAP1 family. As to quaternary structure, associates with the BLOC-1 complex. Interacts with BLOC1S6. Forms a complex containing SNAP47, VAMP2 and STX1A. Ubiquitously expressed with the most abundant expression in the brain. In brain, most highly expressed in the glomerular layer of the olfactory bulb, the cortex, striatum, hippocampus, and colliculi (at protein level).

The protein resides in the endomembrane system. It is found in the cytoplasm. The protein localises to the perinuclear region. May play a role in intracellular membrane fusion. This Mus musculus (Mouse) protein is Synaptosomal-associated protein 47 (Snap47).